Here is a 462-residue protein sequence, read N- to C-terminus: ATP synthase subunit beta (462 aa).

151–158 (GGAGVGKT) provides a ligand contact to ATP.

It belongs to the ATPase alpha/beta chains family. As to quaternary structure, F-type ATPases have 2 components, CF(1) - the catalytic core - and CF(0) - the membrane proton channel. CF(1) has five subunits: alpha(3), beta(3), gamma(1), delta(1), epsilon(1). CF(0) has four main subunits: a(1), b(1), b'(1) and c(9-12).

The protein resides in the cell inner membrane. It catalyses the reaction ATP + H2O + 4 H(+)(in) = ADP + phosphate + 5 H(+)(out). Produces ATP from ADP in the presence of a proton gradient across the membrane. The catalytic sites are hosted primarily by the beta subunits. The sequence is that of ATP synthase subunit beta from Chlorobium phaeobacteroides (strain DSM 266 / SMG 266 / 2430).